Here is a 147-residue protein sequence, read N- to C-terminus: 3-hydroxyacyl-[acyl-carrier-protein] dehydratase FabZ (147 aa).

Residue H46 is part of the active site.

It belongs to the thioester dehydratase family. FabZ subfamily.

The protein localises to the cytoplasm. The enzyme catalyses a (3R)-hydroxyacyl-[ACP] = a (2E)-enoyl-[ACP] + H2O. Functionally, involved in unsaturated fatty acids biosynthesis. Catalyzes the dehydration of short chain beta-hydroxyacyl-ACPs and long chain saturated and unsaturated beta-hydroxyacyl-ACPs. This chain is 3-hydroxyacyl-[acyl-carrier-protein] dehydratase FabZ, found in Syntrophobacter fumaroxidans (strain DSM 10017 / MPOB).